The following is a 571-amino-acid chain: Proline--tRNA ligase (571 aa).

It belongs to the class-II aminoacyl-tRNA synthetase family. ProS type 1 subfamily. As to quaternary structure, homodimer.

It localises to the cytoplasm. It carries out the reaction tRNA(Pro) + L-proline + ATP = L-prolyl-tRNA(Pro) + AMP + diphosphate. Its function is as follows. Catalyzes the attachment of proline to tRNA(Pro) in a two-step reaction: proline is first activated by ATP to form Pro-AMP and then transferred to the acceptor end of tRNA(Pro). As ProRS can inadvertently accommodate and process non-cognate amino acids such as alanine and cysteine, to avoid such errors it has two additional distinct editing activities against alanine. One activity is designated as 'pretransfer' editing and involves the tRNA(Pro)-independent hydrolysis of activated Ala-AMP. The other activity is designated 'posttransfer' editing and involves deacylation of mischarged Ala-tRNA(Pro). The misacylated Cys-tRNA(Pro) is not edited by ProRS. The polypeptide is Proline--tRNA ligase (Syntrophotalea carbinolica (strain DSM 2380 / NBRC 103641 / GraBd1) (Pelobacter carbinolicus)).